The sequence spans 359 residues: Uroporphyrinogen decarboxylase (359 aa).

Residues 36 to 40 (RQAGR), Asp-85, Tyr-160, Ser-215, and His-338 each bind substrate.

It belongs to the uroporphyrinogen decarboxylase family. In terms of assembly, homodimer.

The protein localises to the cytoplasm. It catalyses the reaction uroporphyrinogen III + 4 H(+) = coproporphyrinogen III + 4 CO2. The protein operates within porphyrin-containing compound metabolism; protoporphyrin-IX biosynthesis; coproporphyrinogen-III from 5-aminolevulinate: step 4/4. Its function is as follows. Catalyzes the decarboxylation of four acetate groups of uroporphyrinogen-III to yield coproporphyrinogen-III. In Corynebacterium efficiens (strain DSM 44549 / YS-314 / AJ 12310 / JCM 11189 / NBRC 100395), this protein is Uroporphyrinogen decarboxylase.